The primary structure comprises 240 residues: Orotidine 5'-phosphate decarboxylase (240 aa).

Substrate is bound by residues Asp12, Lys34, 62 to 71 (DMKLFDIGNT), Thr117, Arg180, Gln189, Gly209, and Arg210. The Proton donor role is filled by Lys64.

It belongs to the OMP decarboxylase family. Type 1 subfamily. As to quaternary structure, homodimer.

The enzyme catalyses orotidine 5'-phosphate + H(+) = UMP + CO2. It participates in pyrimidine metabolism; UMP biosynthesis via de novo pathway; UMP from orotate: step 2/2. In terms of biological role, catalyzes the decarboxylation of orotidine 5'-monophosphate (OMP) to uridine 5'-monophosphate (UMP). The chain is Orotidine 5'-phosphate decarboxylase from Ruegeria pomeroyi (strain ATCC 700808 / DSM 15171 / DSS-3) (Silicibacter pomeroyi).